The following is a 221-amino-acid chain: Large ribosomal subunit protein uL1 (221 aa).

The protein belongs to the universal ribosomal protein uL1 family. As to quaternary structure, part of the 50S ribosomal subunit.

Its function is as follows. Probably involved in E site tRNA release. Binds directly to 23S rRNA. Functionally, protein L1 is also a translational repressor protein, it controls the translation of its operon by binding to its mRNA. The protein is Large ribosomal subunit protein uL1 of Sulfolobus acidocaldarius (strain ATCC 33909 / DSM 639 / JCM 8929 / NBRC 15157 / NCIMB 11770).